A 269-amino-acid chain; its full sequence is Ribonuclease HII (269 aa).

The 187-residue stretch at 83-269 (YLIAGVDEVG…HRMSFLTNIL (187 aa)) folds into the RNase H type-2 domain. Residues Asp-89, Glu-90, and Asp-185 each contribute to the a divalent metal cation site.

The protein belongs to the RNase HII family. Mn(2+) serves as cofactor. Requires Mg(2+) as cofactor.

The protein localises to the cytoplasm. It carries out the reaction Endonucleolytic cleavage to 5'-phosphomonoester.. In terms of biological role, endonuclease that specifically degrades the RNA of RNA-DNA hybrids. This chain is Ribonuclease HII, found in Clostridium botulinum (strain Loch Maree / Type A3).